Consider the following 464-residue polypeptide: L-cystine uptake protein TcyP (464 aa).

A run of 10 helical transmembrane segments spans residues 3–23, 34–54, 73–93, 107–127, 184–204, 225–245, 263–283, 347–367, 371–391, and 395–415; these read TLLVGINVAVMLILVGVLYYM, VFTALGVGIIFGLILQFIYEP, YVKLLQMIVMPLILVSIISAF, GLIIGILILTTGIAAAVGIAA, PTSTISVVIFAAFIGIAFIGV, IVMRMVTLILRLTPYGVLALM, FVLASYVALIVMFVIHLLLIA, AGIYPAMLAMMVAPTVGIDPL, FILTLIAVVAISSFGVAGVGG, and FAALIVLSTMNLPIGIVALVI.

Belongs to the dicarboxylate/amino acid:cation symporter (DAACS) (TC 2.A.23) family.

Its subcellular location is the membrane. Mediates uptake of L-cystine, the oxidized form of L-cysteine. The chain is L-cystine uptake protein TcyP from Bacillus cereus (strain ATCC 10987 / NRS 248).